The following is a 467-amino-acid chain: 26S proteasome regulatory subunit 7 homolog (467 aa).

Disordered regions lie at residues 1 to 26 (MPPKEDWEKYKAPLEDDDKKPDDDKI) and 108 to 140 (GNGESDETTTDNNNSGNSNSNSNQQSTDADEDD). Low complexity predominate over residues 117–134 (TDNNNSGNSNSNSNQQST). Ser-164 and Ser-231 each carry phosphoserine. 250 to 257 (GPPGTGKT) contacts ATP.

This sequence belongs to the AAA ATPase family. As to quaternary structure, interacts with UBR1 and CIC1. The N-terminus is blocked.

It localises to the cytoplasm. Its subcellular location is the nucleus. The 26S proteasome is involved in the ATP-dependent degradation of ubiquitinated proteins. The regulatory (or ATPase) complex confers ATP dependency and substrate specificity to the 26S complex. This is 26S proteasome regulatory subunit 7 homolog (RPT1) from Saccharomyces cerevisiae (strain ATCC 204508 / S288c) (Baker's yeast).